We begin with the raw amino-acid sequence, 226 residues long: Guanylate kinase (226 aa).

Positions 13-193 constitute a Guanylate kinase-like domain; sequence GLLLVLSAPS…ALAQLQAIVR (181 aa). 20–27 contacts ATP; it reads APSGAGKT.

It belongs to the guanylate kinase family.

It localises to the cytoplasm. It carries out the reaction GMP + ATP = GDP + ADP. Functionally, essential for recycling GMP and indirectly, cGMP. The chain is Guanylate kinase from Anaeromyxobacter dehalogenans (strain 2CP-C).